A 423-amino-acid chain; its full sequence is Autophagy-related protein 18 (423 aa).

WD repeat units follow at residues 1–34, 183–223, 228–267, and 367–407; these read MNYVTFNQDYTCLAVGTAKGFRIYHTDPFSKIFT, AHRA…KLYQ, TYPSTIFSLSFNMSSTLLCVSSNSDTIHIFRLGGPVTGMP, and SRSG…GGEG. A L/FRRG motif motif is present at residues 224 to 228; the sequence is FRRGT. Positions 260–320 are disordered; it reads GGPVTGMPES…KSTGTFGSMI (61 aa).

It belongs to the WD repeat PROPPIN family. As to quaternary structure, component of the PI(3,5)P2 regulatory complex.

The protein resides in the preautophagosomal structure membrane. It localises to the vacuole membrane. The protein localises to the endosome membrane. The PI(3,5)P2 regulatory complex regulates both the synthesis and turnover of phosphatidylinositol 3,5-bisphosphate (PtdIns(3,5)P2). Necessary for proper vacuole morphology. Plays an important role in osmotically-induced vacuole fragmentation. Required for cytoplasm to vacuole transport (Cvt) vesicle formation, pexophagy and starvation-induced autophagy. Involved in correct atg9 trafficking to the pre-autophagosomal structure. Might also be involved in premeiotic DNA replication. The chain is Autophagy-related protein 18 (atg18) from Sclerotinia sclerotiorum (strain ATCC 18683 / 1980 / Ss-1) (White mold).